Here is a 635-residue protein sequence, read N- to C-terminus: Threonine--tRNA ligase (635 aa).

The TGS domain maps to 1–62 (MITITLPDGS…EHDAILRIIT (62 aa)). Residues 244–535 (DHRKIGKAQD…LIEHYAGIWP (292 aa)) are catalytic. Positions 335, 386, and 512 each coordinate Zn(2+).

It belongs to the class-II aminoacyl-tRNA synthetase family. Homodimer. It depends on Zn(2+) as a cofactor.

The protein resides in the cytoplasm. It catalyses the reaction tRNA(Thr) + L-threonine + ATP = L-threonyl-tRNA(Thr) + AMP + diphosphate + H(+). In terms of biological role, catalyzes the attachment of threonine to tRNA(Thr) in a two-step reaction: L-threonine is first activated by ATP to form Thr-AMP and then transferred to the acceptor end of tRNA(Thr). Also edits incorrectly charged L-seryl-tRNA(Thr). In Xylella fastidiosa (strain M12), this protein is Threonine--tRNA ligase.